Consider the following 402-residue polypeptide: F-box/kelch-repeat protein At4g39590 (402 aa).

Positions 1 to 14 (MFPMSSTSRSSAAN) are enriched in low complexity. Residues 1 to 37 (MFPMSSTSRSSAANNRKDPPRKKNKETPSPVTREPTS) are disordered. Positions 27–37 (TPSPVTREPTS) are enriched in polar residues. In terms of domain architecture, F-box spans 35-81 (PTSIDSLPNDLLLNCFARVSRMYYPALSRVSKRFRSIVTSPEIYNTR). Kelch repeat units follow at residues 143 to 198 (NIYR…VVDG), 199 to 246 (KIYV…YRRA), 255 to 300 (KLYL…LFYW), and 302 to 341 (QGVFKWYDSKVSSWKQLKGLEGLPDDFSQREYCKLVDLGG).

In Arabidopsis thaliana (Mouse-ear cress), this protein is F-box/kelch-repeat protein At4g39590.